A 540-amino-acid polypeptide reads, in one-letter code: Phosphoenolpyruvate carboxykinase (ATP) (540 aa).

Position 65 (Arg-65) interacts with substrate. N6-acetyllysine is present on Lys-87. The substrate site is built by Tyr-207 and Lys-213. Residues Lys-213, His-232, and 248–256 (GLSGTGKTT) contribute to the ATP site. Lys-213 and His-232 together coordinate Mn(2+). Residue Asp-269 participates in Mn(2+) binding. ATP contacts are provided by residues Glu-297, Arg-333, 449 to 450 (RI), and Thr-455. Residue Arg-333 coordinates substrate. At Lys-523 the chain carries N6-acetyllysine.

This sequence belongs to the phosphoenolpyruvate carboxykinase (ATP) family. In terms of assembly, monomer. Requires Mn(2+) as cofactor.

It is found in the cytoplasm. It catalyses the reaction oxaloacetate + ATP = phosphoenolpyruvate + ADP + CO2. It functions in the pathway carbohydrate biosynthesis; gluconeogenesis. Involved in the gluconeogenesis. Catalyzes the conversion of oxaloacetate (OAA) to phosphoenolpyruvate (PEP) through direct phosphoryl transfer between the nucleoside triphosphate and OAA. This chain is Phosphoenolpyruvate carboxykinase (ATP), found in Escherichia fergusonii (strain ATCC 35469 / DSM 13698 / CCUG 18766 / IAM 14443 / JCM 21226 / LMG 7866 / NBRC 102419 / NCTC 12128 / CDC 0568-73).